We begin with the raw amino-acid sequence, 292 residues long: F-box protein SKIP28 (292 aa).

Residues 21–79 (LIVLPYLHSLFELLSMIRVSRSLRDAIRDETALWTKLVIEPPLSSRLTDDILSEFSSKS) enclose the F-box; degenerate domain.

In terms of assembly, part of a SCF (ASK-cullin-F-box) protein ligase complex. Interacts with SKP1A/ASK1 and CUL1.

It participates in protein modification; protein ubiquitination. Component of SCF(ASK-cullin-F-box) E3 ubiquitin ligase complexes, which may mediate the ubiquitination and subsequent proteasomal degradation of target proteins. Required during the endosperm development in embryos. The polypeptide is F-box protein SKIP28 (SKIP28) (Arabidopsis thaliana (Mouse-ear cress)).